A 288-amino-acid chain; its full sequence is ATP synthase gamma chain (288 aa).

The protein belongs to the ATPase gamma chain family. As to quaternary structure, F-type ATPases have 2 components, CF(1) - the catalytic core - and CF(0) - the membrane proton channel. CF(1) has five subunits: alpha(3), beta(3), gamma(1), delta(1), epsilon(1). CF(0) has three main subunits: a, b and c.

Its subcellular location is the cell inner membrane. Its function is as follows. Produces ATP from ADP in the presence of a proton gradient across the membrane. The gamma chain is believed to be important in regulating ATPase activity and the flow of protons through the CF(0) complex. This is ATP synthase gamma chain from Rickettsia akari (strain Hartford).